Reading from the N-terminus, the 317-residue chain is tRNA(Ile)-lysidine synthase (317 aa).

30 to 35 (SGGSDS) contributes to the ATP binding site.

It belongs to the tRNA(Ile)-lysidine synthase family.

Its subcellular location is the cytoplasm. It carries out the reaction cytidine(34) in tRNA(Ile2) + L-lysine + ATP = lysidine(34) in tRNA(Ile2) + AMP + diphosphate + H(+). Its function is as follows. Ligates lysine onto the cytidine present at position 34 of the AUA codon-specific tRNA(Ile) that contains the anticodon CAU, in an ATP-dependent manner. Cytidine is converted to lysidine, thus changing the amino acid specificity of the tRNA from methionine to isoleucine. This Chlamydia caviae (strain ATCC VR-813 / DSM 19441 / 03DC25 / GPIC) (Chlamydophila caviae) protein is tRNA(Ile)-lysidine synthase.